The following is a 71-amino-acid chain: MDVRERNVFGNASVATPGEHQKFVRELILSGHNNVVLQTYTGKWSDCRKHGKSVMYNTGEARHPTCKAHQR.

The protein belongs to the varicellovirus ORF57 protein family.

This is an uncharacterized protein from Homo sapiens (Human).